Reading from the N-terminus, the 627-residue chain is UvrABC system protein C (627 aa).

The GIY-YIG domain maps to 26–105; it reads PEPGVYFMRD…IKQHQPYFNV (80 aa). The region spanning 215-250 is the UVR domain; the sequence is QELIDILSEQMEKAAEALNFEVAARIRDQIAGLKSL.

The protein belongs to the UvrC family. In terms of assembly, interacts with UvrB in an incision complex.

The protein localises to the cytoplasm. The UvrABC repair system catalyzes the recognition and processing of DNA lesions. UvrC both incises the 5' and 3' sides of the lesion. The N-terminal half is responsible for the 3' incision and the C-terminal half is responsible for the 5' incision. This is UvrABC system protein C from Trichormus variabilis (strain ATCC 29413 / PCC 7937) (Anabaena variabilis).